The following is a 706-amino-acid chain: Termination factor NPH-I homolog (706 aa).

One can recognise a Helicase ATP-binding domain in the interval 62–227 (IGQGENTRGL…VPCFNMLSGR (166 aa)). Residue 75–82 (HQMGMGKT) coordinates ATP. Residues 168–171 (DEAH) carry the DEAH box motif. Residues 378-599 (KIVCMLKNIK…HLNSAFRDLL (222 aa)) enclose the Helicase C-terminal domain.

It belongs to the DEAD box helicase family. DEAH subfamily. In terms of assembly, part of the viral DNA-directed RNA polymerase that consists of 8 polII-like subunits (RPB1, RPB2, RPB3, RPB5, RPB6, RPB7, RPB9, RPB10), a capping enzyme and a termination factor.

It localises to the virion. Its function is as follows. Putative DNA-dependent ATPase required for providing the needed energy to achieve the termination of early transcripts. The chain is Termination factor NPH-I homolog from African swine fever virus (isolate Pig/Kenya/KEN-50/1950) (ASFV).